The following is a 714-amino-acid chain: Solute carrier family 12 member 8 (714 aa).

The next 6 helical transmembrane spans lie at 37 to 60 (VLFG…VLFL), 72 to 93 (LLGM…LSGI), 99 to 116 (SSIG…VLGG), 123 to 142 (GLLY…TGFA), 154 to 173 (IWAV…GINL), and 185 to 205 (LLLF…FTHL). Residue Asn221 is glycosylated (N-linked (GlcNAc...) asparagine). 5 consecutive transmembrane segments (helical) span residues 233-254 (FFTV…FNMG), 266-289 (LGSL…LGAI), 309-331 (GFLF…LYGA), 360-377 (PVAA…FVFV), and 383-403 (LAPI…YSYF). Disordered regions lie at residues 471 to 503 (KLES…TLQD) and 530 to 550 (GQES…PEGT). Residues 533-548 (SCWNKQTSKSEGTQPE) show a composition bias toward polar residues. 2 helical membrane-spanning segments follow: residues 593-616 (CNPW…QWVY) and 622-643 (GVAA…LGSA).

Belongs to the SLC12A transporter family. As to expression, ubiquitous with very low level in normal skin.

It localises to the membrane. Functionally, cation/chloride cotransporter that may play a role in the control of keratinocyte proliferation. This is Solute carrier family 12 member 8 (SLC12A8) from Homo sapiens (Human).